A 264-amino-acid chain; its full sequence is Thymidylate synthase (264 aa).

Arg21 is a dUMP binding site. Position 51 (His51) interacts with (6R)-5,10-methylene-5,6,7,8-tetrahydrofolate. DUMP is bound at residue 126–127; it reads RR. The active-site Nucleophile is the Cys146. DUMP is bound by residues 166–169, Asn177, and 207–209; these read RSAD and HIY. Asp169 is a binding site for (6R)-5,10-methylene-5,6,7,8-tetrahydrofolate. Ala263 lines the (6R)-5,10-methylene-5,6,7,8-tetrahydrofolate pocket.

The protein belongs to the thymidylate synthase family. Bacterial-type ThyA subfamily. Homodimer.

The protein localises to the cytoplasm. It catalyses the reaction dUMP + (6R)-5,10-methylene-5,6,7,8-tetrahydrofolate = 7,8-dihydrofolate + dTMP. It participates in pyrimidine metabolism; dTTP biosynthesis. Functionally, catalyzes the reductive methylation of 2'-deoxyuridine-5'-monophosphate (dUMP) to 2'-deoxythymidine-5'-monophosphate (dTMP) while utilizing 5,10-methylenetetrahydrofolate (mTHF) as the methyl donor and reductant in the reaction, yielding dihydrofolate (DHF) as a by-product. This enzymatic reaction provides an intracellular de novo source of dTMP, an essential precursor for DNA biosynthesis. This is Thymidylate synthase from Brucella anthropi (strain ATCC 49188 / DSM 6882 / CCUG 24695 / JCM 21032 / LMG 3331 / NBRC 15819 / NCTC 12168 / Alc 37) (Ochrobactrum anthropi).